A 59-amino-acid chain; its full sequence is Large ribosomal subunit protein uL30 (59 aa).

Belongs to the universal ribosomal protein uL30 family. In terms of assembly, part of the 50S ribosomal subunit.

In Mycolicibacterium vanbaalenii (strain DSM 7251 / JCM 13017 / BCRC 16820 / KCTC 9966 / NRRL B-24157 / PYR-1) (Mycobacterium vanbaalenii), this protein is Large ribosomal subunit protein uL30.